The primary structure comprises 200 residues: Dephospho-CoA kinase (200 aa).

A DPCK domain is found at 4 to 200 (TIGLTGSVAT…TFIERFVKNK (197 aa)). 12–17 (ATGKST) contributes to the ATP binding site.

The protein belongs to the CoaE family.

It is found in the cytoplasm. The enzyme catalyses 3'-dephospho-CoA + ATP = ADP + CoA + H(+). It functions in the pathway cofactor biosynthesis; coenzyme A biosynthesis; CoA from (R)-pantothenate: step 5/5. Its function is as follows. Catalyzes the phosphorylation of the 3'-hydroxyl group of dephosphocoenzyme A to form coenzyme A. The sequence is that of Dephospho-CoA kinase from Listeria monocytogenes serovar 1/2a (strain ATCC BAA-679 / EGD-e).